The sequence spans 221 residues: Transmembrane protein 225B (221 aa).

A run of 4 transmembrane segments spans residues 14–34 (WAIV…VSIF), 77–97 (VFLL…MPFA), 109–129 (FVLA…LVLH), and 147–167 (VLWP…AGTI).

It localises to the membrane. The protein is Transmembrane protein 225B of Homo sapiens (Human).